Reading from the N-terminus, the 253-residue chain is Ice-binding protein (253 aa).

The N-terminal stretch at 1 to 27 is a signal peptide; the sequence is MKTLISNSKKVLIPLIMGSIFAGNVMA. Cysteine 75 and cysteine 93 are disulfide-bonded. Short sequence motifs (ice-binding site motif (T-A/G-X-T/N)) lie at residues 220 to 223 and 232 to 235; these read TGTT and TAVT.

It belongs to the ice-binding protein family.

Its subcellular location is the secreted. Binds to the surface of ice crystals and inhibits their growth. Has ice recrystallization inhibition (RI) activity (the ability to prevent the formation of larger grains of ice at the expense of smaller grains), which may protect membranes from freezing injury. Has high thermal hysteresis (TH) activity, which is the ability to lower the freezing point of an aqueous solution below its melting point, and thus the freezing of the cell fluid can be prevented protecting the organism from ice damage. The TH activity of this protein is 3.8 degrees Celsius at 14 mM. This is Ice-binding protein from Colwellia sp.